The chain runs to 362 residues: Fiber protein (362 aa).

The protein belongs to the adenoviridae fiber family. As to quaternary structure, homotrimer. Interacts with host receptor CXCAR. Interacts (via N-terminal tail region) with pentons.

The protein localises to the virion. The protein resides in the host nucleus. Forms spikes that protrude from each vertex of the icosahedral capsid. Interacts with host receptor CXCAR to provide virion initial attachment to target cell. Fiber proteins are shed during virus entry, when virus is still at the cell surface. The sequence is that of Fiber protein from Homo sapiens (Human).